A 245-amino-acid polypeptide reads, in one-letter code: Isopentenyl phosphate kinase (245 aa).

5–9 (KIGGS) serves as a coordination point for ATP. A substrate-binding site is contributed by Gly45. Position 46 (Gly46) interacts with ATP. The substrate site is built by His50 and Gly143. Residues Asp164, 169–174 (YSKDPK), Gly201, and Lys205 each bind ATP.

The protein belongs to the isopentenyl phosphate kinase family. As to quaternary structure, homodimer.

The enzyme catalyses isopentenyl phosphate + ATP = isopentenyl diphosphate + ADP. Catalyzes the formation of isopentenyl diphosphate (IPP), the building block of all isoprenoids. Has lower activity with isopentenyl thiolophosphate (ISP). Has low activity with dimethylallyl phosphate (DMAP), 1-butyl phosphate (BP) and 3-buten-1-yl phosphate (BEP). Has no significant activity with geranyl phosphate (in vitro). The protein is Isopentenyl phosphate kinase of Thermoplasma acidophilum (strain ATCC 25905 / DSM 1728 / JCM 9062 / NBRC 15155 / AMRC-C165).